The chain runs to 65 residues: Large ribosomal subunit protein bL35 (65 aa).

It belongs to the bacterial ribosomal protein bL35 family.

This chain is Large ribosomal subunit protein bL35, found in Thermus thermophilus (strain ATCC BAA-163 / DSM 7039 / HB27).